Reading from the N-terminus, the 251-residue chain is uncharacterized protein (251 aa).

The Response regulatory domain occupies 3-118 (KVIICDDERI…QLEHILDILV (116 aa)). Aspartate 55 is subject to 4-aspartylphosphate. The region spanning 152–249 (NQILSQIKQH…HMSPSDYNKQ (98 aa)) is the HTH araC/xylS-type domain. 2 consecutive DNA-binding regions (H-T-H motif) follow at residues 169–190 (LDLI…KEHV) and 216–239 (HYEI…KKYL).

In terms of processing, phosphorylated by SERP2405.

The protein resides in the cytoplasm. Functionally, probable member of the two-component regulatory system SERP2405/SERP2406. This is an uncharacterized protein from Staphylococcus epidermidis (strain ATCC 35984 / DSM 28319 / BCRC 17069 / CCUG 31568 / BM 3577 / RP62A).